Consider the following 420-residue polypeptide: Probable secreted beta-glucosidase SUN4 (420 aa).

The first 24 residues, 1–24 (MKLSATTLTAASLIGYSTIVSALP), serve as a signal peptide directing secretion. Residues 89–145 (TKSSSKVASSSESTEQIATTSSSAQTTLTSSETSTSESSVPISTSGSASTSSAASSA) form a disordered region. N395 carries N-linked (GlcNAc...) asparagine glycosylation.

This sequence belongs to the SUN family. Glycosylated.

It localises to the secreted. Its subcellular location is the cell wall. In terms of biological role, involved in the remodeling of the cell wall during the various phases of yeast culture development and under various environmental conditions and plays a role in septation. This Saccharomyces cerevisiae (strain ATCC 204508 / S288c) (Baker's yeast) protein is Probable secreted beta-glucosidase SUN4 (SUN4).